A 357-amino-acid polypeptide reads, in one-letter code: S-adenosylmethionine:tRNA ribosyltransferase-isomerase (357 aa).

It belongs to the QueA family. As to quaternary structure, monomer.

Its subcellular location is the cytoplasm. The enzyme catalyses 7-aminomethyl-7-carbaguanosine(34) in tRNA + S-adenosyl-L-methionine = epoxyqueuosine(34) in tRNA + adenine + L-methionine + 2 H(+). It functions in the pathway tRNA modification; tRNA-queuosine biosynthesis. Its function is as follows. Transfers and isomerizes the ribose moiety from AdoMet to the 7-aminomethyl group of 7-deazaguanine (preQ1-tRNA) to give epoxyqueuosine (oQ-tRNA). This is S-adenosylmethionine:tRNA ribosyltransferase-isomerase from Buchnera aphidicola subsp. Acyrthosiphon pisum (strain Tuc7).